Here is a 74-residue protein sequence, read N- to C-terminus: Anionic peptide clone 8 (74 aa).

Positions 1 to 24 (MVSKSLIVLLLVSVLVSTFFTTEA) are cleaved as a signal peptide.

This sequence belongs to the non-disulfide-bridged peptide (NDBP) superfamily. Long chain multifunctional peptide (group 2) family. Expressed by the venom gland.

The protein resides in the secreted. May be an antimicrobial peptide. The chain is Anionic peptide clone 8 from Tityus costatus (Brazilian scorpion).